The chain runs to 447 residues: Phosphatidylinositol 4-kinase type 2-alpha (447 aa).

The tract at residues 1–77 is disordered; it reads MDETSPLVSP…HRNEFPEDPE (77 aa). Residues 48 to 77 are compositionally biased toward basic and acidic residues; the sequence is RSRERQPLLDRDRGASPRDPHRNEFPEDPE. The region spanning 92 to 421 is the PI3K/PI4K catalytic domain; sequence GIYPERIYQG…VQMPPVIVET (330 aa). A G-loop region spans residues 98-104; the sequence is IYQGSSG. Residues 99–105 and K120 contribute to the ATP site; that span reads YQGSSGS. The segment at 125-127 is important for substrate binding; sequence EPY. The tract at residues 133 to 146 is important for interaction with membranes; it reads KWTKWLQKLCCPCC. 4 S-palmitoyl cysteine lipidation sites follow: C142, C143, C145, and C146. 229-232 contributes to the ATP binding site; sequence QIFV. An important for interaction with membranes region spans residues 236–244; sequence KDADFWLRR. The interval 273 to 281 is catalytic loop; sequence RNTDRGNDN. The activation loop stretch occupies residues 312–332; sequence AIDNGLAFPLKHPDSWRAYPF. D314 contacts ATP. The tract at residues 327–336 is important for interaction with membranes; that stretch reads WRAYPFYWAW.

It belongs to the PI3/PI4-kinase family. Type II PI4K subfamily.

The protein localises to the golgi apparatus. Its subcellular location is the trans-Golgi network membrane. It is found in the membrane raft. The protein resides in the endosome. It localises to the cytoplasmic vesicle. The protein localises to the cell projection. Its subcellular location is the dendrite. It is found in the presynaptic cell membrane. The protein resides in the synapse. It localises to the synaptosome. The protein localises to the mitochondrion. Its subcellular location is the membrane. It is found in the cell membrane. The protein resides in the perikaryon. It localises to the neuron projection. The catalysed reaction is a 1,2-diacyl-sn-glycero-3-phospho-(1D-myo-inositol) + ATP = a 1,2-diacyl-sn-glycero-3-phospho-(1D-myo-inositol 4-phosphate) + ADP + H(+). In terms of biological role, membrane-bound phosphatidylinositol-4 kinase (PI4-kinase) that catalyzes the phosphorylation of phosphatidylinositol (PI) to phosphatidylinositol 4-phosphate (PI4P), a lipid that plays important roles in endocytosis, Golgi function, protein sorting and membrane trafficking. Besides, phosphorylation of phosphatidylinositol (PI) to phosphatidylinositol 4-phosphate (PI4P) is the first committed step in the generation of phosphatidylinositol 4,5-bisphosphate (PIP2), a precursor of the second messenger inositol 1,4,5-trisphosphate (InsP3). The chain is Phosphatidylinositol 4-kinase type 2-alpha (pi4k2a) from Danio rerio (Zebrafish).